Consider the following 365-residue polypeptide: Nicotinate N-methyltransferase 1 (365 aa).

Aspartate 232 contacts S-adenosyl-L-methionine.

The protein belongs to the class I-like SAM-binding methyltransferase superfamily. Cation-independent O-methyltransferase family.

The enzyme catalyses nicotinate + S-adenosyl-L-methionine = N-methylnicotinate + S-adenosyl-L-homocysteine. Functionally, involved in nicotinate detoxification in planta. Catalyzes the conversion of nicotinate to N-methylnicotinate, which is a detoxified form of endogenous nicotinate in planta. This is Nicotinate N-methyltransferase 1 from Oryza sativa subsp. japonica (Rice).